A 548-amino-acid chain; its full sequence is Membrane protein insertase YidC (548 aa).

Helical transmembrane passes span 6-26, 357-377, 424-444, 455-475, and 503-523; these read NLIL…WESD, NWGV…FPLT, LGGC…YWAL, FALW…PILM, and PIIF…YWLV.

The protein belongs to the OXA1/ALB3/YidC family. Type 1 subfamily. Interacts with the Sec translocase complex via SecD. Specifically interacts with transmembrane segments of nascent integral membrane proteins during membrane integration.

Its subcellular location is the cell inner membrane. In terms of biological role, required for the insertion and/or proper folding and/or complex formation of integral membrane proteins into the membrane. Involved in integration of membrane proteins that insert both dependently and independently of the Sec translocase complex, as well as at least some lipoproteins. Aids folding of multispanning membrane proteins. This Aeromonas hydrophila subsp. hydrophila (strain ATCC 7966 / DSM 30187 / BCRC 13018 / CCUG 14551 / JCM 1027 / KCTC 2358 / NCIMB 9240 / NCTC 8049) protein is Membrane protein insertase YidC.